Here is a 322-residue protein sequence, read N- to C-terminus: HPr kinase/phosphorylase (322 aa).

Catalysis depends on residues H146 and K167. 161-168 lines the ATP pocket; it reads GDSGLGKS. S168 contacts Mg(2+). The Proton acceptor; for phosphorylation activity. Proton donor; for dephosphorylation activity role is filled by D185. The segment at 209–218 is important for the catalytic mechanism of both phosphorylation and dephosphorylation; that stretch reads LEVRGLGLLD. Position 210 (E210) interacts with Mg(2+). Residue R250 is part of the active site. The important for the catalytic mechanism of dephosphorylation stretch occupies residues 271 to 276; the sequence is QVAAGR.

It belongs to the HPrK/P family. As to quaternary structure, homohexamer. It depends on Mg(2+) as a cofactor.

It carries out the reaction [HPr protein]-L-serine + ATP = [HPr protein]-O-phospho-L-serine + ADP + H(+). It catalyses the reaction [HPr protein]-O-phospho-L-serine + phosphate + H(+) = [HPr protein]-L-serine + diphosphate. Its function is as follows. Catalyzes the ATP- as well as the pyrophosphate-dependent phosphorylation of a specific serine residue in HPr, a phosphocarrier protein of the phosphoenolpyruvate-dependent sugar phosphotransferase system (PTS). HprK/P also catalyzes the pyrophosphate-producing, inorganic phosphate-dependent dephosphorylation (phosphorolysis) of seryl-phosphorylated HPr (P-Ser-HPr). The chain is HPr kinase/phosphorylase from Burkholderia lata (strain ATCC 17760 / DSM 23089 / LMG 22485 / NCIMB 9086 / R18194 / 383).